Here is a 65-residue protein sequence, read N- to C-terminus: Large ribosomal subunit protein eL24 (65 aa).

Positions 6, 9, 32, and 36 each coordinate Zn(2+). The C4-type zinc-finger motif lies at 6–36 (CAFCGADIPPGYGIMYVKSDGTVLRYCSRKC).

Belongs to the eukaryotic ribosomal protein eL24 family. As to quaternary structure, part of the 50S ribosomal subunit. Forms a cluster with proteins L3 and L14. Zn(2+) is required as a cofactor.

Functionally, binds to the 23S rRNA. In Pyrobaculum arsenaticum (strain DSM 13514 / JCM 11321 / PZ6), this protein is Large ribosomal subunit protein eL24.